The following is a 287-amino-acid chain: Inositol diphosphatase siw14 (287 aa).

The region spanning 85–256 is the Tyrosine-protein phosphatase domain; sequence NFGVVYPGII…LNDLKRYISD (172 aa). A phosphoserine mark is found at Ser-156 and Ser-159. Cys-189 acts as the Phosphocysteine intermediate in catalysis.

Belongs to the protein-tyrosine phosphatase family. Atypical dual-specificity phosphatase Siw14-like subfamily.

Its subcellular location is the cytoplasm. It localises to the nucleus. The enzyme catalyses 5-diphospho-1D-myo-inositol 1,2,3,4,6-pentakisphosphate + H2O = 1D-myo-inositol hexakisphosphate + phosphate + H(+). The catalysed reaction is 1-diphospho-1D-myo-inositol 2,3,4,5,6-pentakisphosphate + H2O = 1D-myo-inositol hexakisphosphate + phosphate + H(+). It catalyses the reaction 1,5-bis(diphospho)-1D-myo-inositol 2,3,4,6-tetrakisphosphate + H2O = 1-diphospho-1D-myo-inositol 2,3,4,5,6-pentakisphosphate + phosphate + 2 H(+). Activity is inhibited by the reaction product inorganic phosphate and by sulfate (a phosphate mimetic). Not inhibited by magnesium. Cleaves the beta-phosphate at the 1- and 5-position of soluble inositol pyrophosphates. Has exopolyphosphatase activity in vitro but does not appear to contribute to the homeostasis of cellular polyphosphate. The sequence is that of Inositol diphosphatase siw14 from Schizosaccharomyces pombe (strain 972 / ATCC 24843) (Fission yeast).